A 514-amino-acid polypeptide reads, in one-letter code: Pleiotropic regulator 1 (514 aa).

The residue at position 1 (methionine 1) is an N-acetylmethionine. Position 119 is a phosphoserine (serine 119). The tract at residues 135–160 (KADANRTAPSGSEYRHPGASDRPQPT) is disordered. The residue at position 201 (serine 201) is a Phosphoserine. 7 WD repeats span residues 202–241 (GHLG…LKLS), 244–283 (GHIS…VIRH), 286–325 (GHLS…SVHT), 328–367 (GHTN…TRVT), 370–410 (NHKK…QNLS), 411–449 (GHNA…NFQR), and 460–499 (DSES…TEET). Residue serine 391 is modified to Phosphoserine.

Belongs to the WD repeat PRL1/PRL2 family. In terms of assembly, identified in the spliceosome C complex. Component of the PRP19-CDC5L splicing complex composed of a core complex comprising a homotetramer of PRPF19, CDC5L, PLRG1 and BCAS2, and at least three less stably associated proteins CTNNBL1, CWC15 and HSPA8. Interacts (via its WD40 repeat domain) directly with CDC5L (via its C-terminal); the interaction is required for mRNA splicing but not for spliceosome assembly. Component of the minor spliceosome, which splices U12-type introns. Within this complex, interacts with CRIPT. Also interacts directly in the complex with BCAS2 and PRPF19. Interacts with USB1.

It localises to the nucleus. Its subcellular location is the nucleus speckle. Functionally, involved in pre-mRNA splicing as component of the spliceosome. Component of the PRP19-CDC5L complex that forms an integral part of the spliceosome and is required for activating pre-mRNA splicing. As a component of the minor spliceosome, involved in the splicing of U12-type introns in pre-mRNAs. The protein is Pleiotropic regulator 1 (PLRG1) of Homo sapiens (Human).